Reading from the N-terminus, the 570-residue chain is Ferroportin (570 aa).

Over 1-23 (MTKARDQTHQEGCCGSLANYLTS) the chain is Cytoplasmic. A helical membrane pass occupies residues 24–53 (AKFLLYLGHSLSTWGDRMWHFAVSVFLVEL). D39 and H43 together coordinate Fe cation. Residues 54 to 57 (YGNS) lie on the Extracellular side of the membrane. The helical transmembrane segment at 58 to 84 (LLLTAVYGLVVAGSVLVLGAIIGDWVD) threads the bilayer. At 85–87 (KNA) the chain is on the cytoplasmic side. A helical transmembrane segment spans residues 88 to 118 (RLKVAQTSLVVQNVSVILCGIILMMVFLHKN). At 119 to 126 (ELLTMYHG) the chain is on the extracellular side. Residues 127–162 (WVLTVCYILIITIANIANLASTATAITIQRDWIVVV) traverse the membrane as a helical segment. Residues 163-164 (AG) are Cytoplasmic-facing. Residues 165–195 (ENRSRLADMNATIRRIDQLTNILAPMAVGQI) form a helical membrane-spanning segment. Residues 196-202 (MTFGSPV) lie on the Extracellular side of the membrane. Residues 203 to 229 (IGCGFISGWNLVSMCVEYFLLWKVYQK) traverse the membrane as a helical segment. Residues 230-306 (TPALAVKAAL…DGWVSYYNQP (77 aa)) are Cytoplasmic-facing. Residues 307 to 333 (VFLAGMGLAFLYMTVLGFDCITTGYAY) traverse the membrane as a helical segment. A Fe cation-binding site is contributed by C326. Residues 334-338 (TQGLS) lie on the Extracellular side of the membrane. Residues 339-366 (GSILSILMGASAITGIMGTVAFTWLRRK) traverse the membrane as a helical segment. Residues 367-368 (CG) are Cytoplasmic-facing. The helical transmembrane segment at 369-391 (LVRTGLFSGLAQLSCLILCVISV) threads the bilayer. At 392–452 (FMPGSPLDLS…EMSTKPIPIV (61 aa)) the chain is on the extracellular side. An N-linked (GlcNAc...) asparagine glycan is attached at N437. The helical transmembrane segment at 453–482 (SVSLLFAGVIAARIGLWSFDLTVTQLLQEN) threads the bilayer. Residues 483–487 (VIESE) are Cytoplasmic-facing. A helical transmembrane segment spans residues 488-512 (RGIINGVQNSMNYLLDLLHFIMVIL). A Fe cation-binding site is contributed by H506. Over 513–515 (APN) the chain is Extracellular. The chain crosses the membrane as a helical span at residues 516–541 (PEAFGLLVLISVSFVAMGHLMYFRFA). At 542–570 (QKTLGNQIFVCGPDEKEVTDENQPNTSVV) the chain is on the cytoplasmic side.

This sequence belongs to the ferroportin (FP) (TC 2.A.100) family. SLC40A subfamily. In terms of assembly, identified in a complex with STOM. Interacts with HAMP; affinity of the peptide hormone HAMP for SLC40A1 increases by 80-fold in the presence of iron and the interaction promotes SLC40A1 ubiquitination and degradation. Part of a complex composed of SLC40A1/ferroportin, TF/transferrin and HEPH/hephaestin that transfers iron from cells to transferrin. Polyubiquitinated by RNF217; leading to proteasomal degradation. Under conditions of high systemic iron levels, both the hormone peptide hepcidin/HAMP and holo(iron bound)-transferrin/TF induce the ubiquitination, internalization and proteasomal degradation of SLC40A1 to control iron release from cells. In terms of tissue distribution, high expression in spleen, liver, kidney, heart and duodenum.

The protein resides in the cell membrane. It is found in the basolateral cell membrane. It carries out the reaction Fe(2+)(in) = Fe(2+)(out). Transports Fe(2+) from the inside of a cell to the outside of the cell, playing a key role for maintaining systemic iron homeostasis. Transports iron from intestinal, splenic, hepatic cells, macrophages and erythrocytes into the blood to provide iron to other tissues. Controls therefore dietary iron uptake, iron recycling by macrophages and erythrocytes, and release of iron stores in hepatocytes. When iron is in excess in serum, circulating HAMP/hepcidin levels increase resulting in a degradation of SLC40A1, thus limiting the iron efflux to plasma. The chain is Ferroportin from Mus musculus (Mouse).